Here is a 508-residue protein sequence, read N- to C-terminus: MILVLDFGSQYTQLIARRLRESGIYAEIVPFFESIENIQKKAPKGLILSGGPASVYAKDAYKPSKKIFDLDLPILGICYGMQYLVDFFGGVVACTNEQEFGKAILEITQDSVIFEGVKIKSLVWMSHMDKVIELPKGFTTLAKSPNSPHCAIENAKIFGLQFHPEVIQSEEGGKILENFALLVCGCEKTWGMQHFAQKEMARLKEKIANAKVLCAVSGGVDSTVVATLLHRAIKDNLIAVFVDHGLLRKNEKEKVQAMFKDLQIPLNTIDAKEIFLSKLKGVSEPELKRKIIGETFIEAFEKEAKKHHLKGKIEFLAQGTLYPDVIESVSVKGPSKVIKTHHNVGGLPEWMDFKLIEPLRELFKDEVRLLGKELGISQDFLMRHPFPGPGLAIRILGEVSESKIRCLQEADFIFIEELKKANLYDKVWQAFCVLLNVNSVGVMGDNRTYENAICLRAVNASDGMTASFSFLEHSFLEKVSNRITNEVSGINRVVYDITSKPPGTIEWE.

A Glutamine amidotransferase type-1 domain is found at 1-189 (MILVLDFGSQ…ALLVCGCEKT (189 aa)). Catalysis depends on C78, which acts as the Nucleophile. Residues H163 and E165 contribute to the active site. The 194-residue stretch at 190–383 (WGMQHFAQKE…LGISQDFLMR (194 aa)) folds into the GMPS ATP-PPase domain. 217 to 223 (SGGVDST) serves as a coordination point for ATP.

Homodimer.

It carries out the reaction XMP + L-glutamine + ATP + H2O = GMP + L-glutamate + AMP + diphosphate + 2 H(+). It participates in purine metabolism; GMP biosynthesis; GMP from XMP (L-Gln route): step 1/1. Functionally, catalyzes the synthesis of GMP from XMP. This is GMP synthase [glutamine-hydrolyzing] from Helicobacter pylori (strain Shi470).